The sequence spans 321 residues: Ubiquinone biosynthesis protein COQ4, mitochondrial (321 aa).

The Zn(2+) site is built by His-205, Asp-206, His-209, and Glu-221.

The protein belongs to the COQ4 family. Component of a multi-subunit COQ enzyme complex, composed of at least COQ3, COQ4, COQ5, COQ6, COQ7 and COQ9. Zn(2+) serves as cofactor.

The protein localises to the mitochondrion inner membrane. The catalysed reaction is a 4-hydroxy-3-methoxy-5-(all-trans-polyprenyl)benzoate + H(+) = a 2-methoxy-6-(all-trans-polyprenyl)phenol + CO2. It functions in the pathway cofactor biosynthesis; ubiquinone biosynthesis. Lyase that catalyzes the C1-decarboxylation of 4-hydroxy-3-methoxy-5-(all-trans-polyprenyl)benzoic acid into 2-methoxy-6-(all-trans-polyprenyl)phenol during ubiquinone biosynthesis. The protein is Ubiquinone biosynthesis protein COQ4, mitochondrial of Candida tropicalis (strain ATCC MYA-3404 / T1) (Yeast).